Consider the following 666-residue polypeptide: DEAD-box ATP-dependent RNA helicase 30 (666 aa).

Residues 53-102 (PDPNLPRRLPFPSSSSTPTAAAPPDSGEPSRARARTETYRTGDMNPYDLR) form a disordered region. Residues 64–76 (PSSSSTPTAAAPP) show a composition bias toward low complexity. Residues 80-92 (EPSRARARTETYR) show a composition bias toward basic and acidic residues. A Q motif motif is present at residues 251 to 279 (RYFQEANFPDYCMQAIAKSGFVEPTPIQS). One can recognise a Helicase ATP-binding domain in the interval 282–457 (WPMALKGRDM…RQFLQNPYKV (176 aa)). Residue 295–302 (AQTGSGKT) coordinates ATP. The short motif at 405 to 408 (DEAD) is the DEAD box element. In terms of domain architecture, Helicase C-terminal spans 485 to 630 (RLSKLLSDLM…VVNPALESMA (146 aa)). Residues 632–666 (SASSMGGGNFRSRGRGGFGNRSGSNSIPIRGRRPY) are disordered. Positions 636–651 (MGGGNFRSRGRGGFGN) are enriched in gly residues.

Belongs to the DEAD box helicase family. DDX5/DBP2 subfamily.

The protein resides in the nucleus. It catalyses the reaction ATP + H2O = ADP + phosphate + H(+). Its function is as follows. ATP-dependent RNA helicase involved nonsense-mediated mRNA decay and ribosome biogenesis through rRNA processing. The polypeptide is DEAD-box ATP-dependent RNA helicase 30 (Oryza sativa subsp. japonica (Rice)).